A 705-amino-acid polypeptide reads, in one-letter code: Calpain-1 catalytic subunit (705 aa).

The region spanning 48-347 (LFRDPQFPAG…FSRLEICNLT (300 aa)) is the Calpain catalytic domain. Residues C108, H265, and N289 contribute to the active site. The domain III stretch occupies residues 348-517 (PDALTKDELS…KQSDTAELDE (170 aa)). Residues 518–533 (EISADLADEEEITEDD) are linker. Residues 530-565 (TEDDIEDGFKNMFQQLAGEDMEISVFELKTILNRVI) form the EF-hand 1 domain. A domain IV region spans residues 534–704 (IEDGFKNMFQ…LAEWLLLTMC (171 aa)). Ca(2+) is bound by residues D549, E551, E556, D589, D591, S593, R595, E600, D619, D621, S623, T625, and E630. EF-hand domains are found at residues 606-641 (NKIRSWLTIFRQYDLDKSGTMSSYEMRMALESAGFK) and 671-705 (VKLETMFRFFHSMDRDGTGTAVMNLAEWLLLTMCG).

This sequence belongs to the peptidase C2 family. As to quaternary structure, heterodimer of large (catalytic) and a small (regulatory) subunit. The cofactor is Ca(2+). In terms of processing, the N-terminus is blocked. In terms of tissue distribution, ubiquitously expressed.

It localises to the cytoplasm. The protein localises to the cell membrane. The catalysed reaction is Broad endopeptidase specificity.. Its activity is regulated as follows. Activated by micromolar concentrations of calcium and inhibited by calpastatin. Functionally, calcium-regulated non-lysosomal thiol-protease which catalyze limited proteolysis of substrates involved in cytoskeletal remodeling and signal transduction. This chain is Calpain-1 catalytic subunit, found in Gallus gallus (Chicken).